Consider the following 394-residue polypeptide: Mitogen-activated protein kinase 2 (394 aa).

Positions 1–10 are enriched in polar residues; it reads MDGPAQQTDT. A disordered region spans residues 1–27; it reads MDGPAQQTDTVMAEAAAAQQPAPPSQP. In terms of domain architecture, Protein kinase spans 61–346; sequence KPPIMPIGKG…VEDALAHPYL (286 aa). Residues 67 to 75 and lysine 90 each bind ATP; that span reads IGKGAYGIV. The active-site Proton acceptor is aspartate 187. Threonine 219 bears the Phosphothreonine mark. The TXY motif lies at 219-221; it reads TEY. Tyrosine 221 carries the post-translational modification Phosphotyrosine. Phosphothreonine is present on threonine 224.

The protein belongs to the protein kinase superfamily. CMGC Ser/Thr protein kinase family. MAP kinase subfamily. The cofactor is Mg(2+). Activated by cold, wounding and UV-C in a cultivar-dependent manner; phosphorylated at Tyr-221 in cv. Subicho but not in cv. Pungchon. Expressed constitutively in roots, stems, flowers and fruits of the hot pepper (cv. Subicho).

The enzyme catalyses L-seryl-[protein] + ATP = O-phospho-L-seryl-[protein] + ADP + H(+). It carries out the reaction L-threonyl-[protein] + ATP = O-phospho-L-threonyl-[protein] + ADP + H(+). Its activity is regulated as follows. Activated by threonine and tyrosine phosphorylation. In terms of biological role, protein kinase involved in oxidative stress-mediated and innate immune MAP kinase signaling cascades. In Capsicum annuum (Capsicum pepper), this protein is Mitogen-activated protein kinase 2.